The sequence spans 1032 residues: Toll-like receptor 9 (1032 aa).

The first 25 residues, Met1–Ala25, serve as a signal peptide directing secretion. The Extracellular portion of the chain corresponds to Leu26–Asp818. An intrachain disulfide couples Cys35 to Cys45. Trp47–Lys51 is a binding site for DNA. LRR repeat units follow at residues Cys62–His85, Ser87–Cys110, Met122–Asn147, Leu150–Leu166, Tyr167–Val190, Leu198–Ser221, Glu223–Asn242, Leu243–Cys268, Leu283–Gly306, Val308–Asn332, Leu333–Leu356, Leu363–Trp386, Leu390–Thr413, Arg415–Glu440, Cys471–Asn495, Ser497–Pro520, Leu521–Glu544, Pro546–Thr573, Leu575–Asn599, Val601–His623, Leu628–Asn651, Pro653–Phe676, Leu677–Asn700, Thr702–Leu724, Ala725–Pro748, and Val750–Asp773. Residue Asn64 is glycosylated (N-linked (GlcNAc...) asparagine). Residues Ser72 to His77 and Lys95 to Ser109 each bind DNA. Residues Cys98 and Cys110 are joined by a disulfide bond. Asn129 carries N-linked (GlcNAc...) asparagine glycosylation. Tyr132 serves as a coordination point for DNA. N-linked (GlcNAc...) asparagine glycosylation occurs at Asn147. A disulfide bond links Cys178 and Cys184. Tyr179–Lys181 contributes to the DNA binding site. N-linked (GlcNAc...) asparagine glycosylation occurs at Asn200. Tyr208 serves as a coordination point for DNA. N-linked (GlcNAc...) asparagine glycosylation is found at Asn210 and Asn242. Intrachain disulfides connect Cys255/Cys268 and Cys258/Cys265. S-palmitoyl cysteine attachment occurs at residues Cys258 and Cys265. 4 N-linked (GlcNAc...) asparagine glycosylation sites follow: Asn300, Asn309, Asn332, and Asn340. Residues Pro430–Pro462 form a disordered region. Residues Thr437 to Leu450 show a composition bias toward acidic residues. A disulfide bridge links Cys471 with Cys501. N-linked (GlcNAc...) asparagine glycans are attached at residues Asn495 and Asn514. An N-linked (GlcNAc...) asparagine glycan is attached at Asn568. N-linked (GlcNAc...) asparagine glycans are attached at residues Asn670, Asn695, and Asn700. Residues Asn732 and Asn752 are each glycosylated (N-linked (GlcNAc...) asparagine). Disulfide bonds link Cys765–Cys791 and Cys767–Cys810. The chain crosses the membrane as a helical span at residues Cys819 to Leu839. At Cys840–Glu1032 the chain is on the cytoplasmic side. The 146-residue stretch at Leu868–Leu1013 folds into the TIR domain.

This sequence belongs to the Toll-like receptor family. As to quaternary structure, monomer and homodimer. Exists as a monomer in the absence of unmethylated cytidine-phosphate-guanosine (CpG) ligand. Proteolytic processing of an insertion loop (Z-loop) is required for homodimerization upon binding to the unmethylated CpG ligand leading to its activation. Interacts with MYD88 via their respective TIR domains. Interacts with BTK. Interacts (via transmembrane domain) with UNC93B1. Interacts with CD300LH; the interaction may promote full activation of TLR9-triggered innate responses. Interacts with CNPY3 and HSP90B1; this interaction is required for proper folding in the endoplasmic reticulum. Interacts with SMPDL3B. Interacts with CD82; this interaction is essential for TLR9-dependent myddosome formation in response to CpG stimulation. Post-translationally, activated by proteolytic cleavage of the flexible loop between repeats LRR14 and LRR15 within the ectodomain. Cleavage requires UNC93B1. Proteolytically processed by first removing the majority of the ectodomain by either asparagine endopeptidase (AEP) or a cathepsin followed by a trimming event that is solely cathepsin mediated and required for optimal receptor signaling. In terms of processing, palmitoylated by ZDHHC3 in the Golgi regulates TLR9 trafficking from the Golgi to endosomes. Depalmitoylation by PPT1 controls the release of TLR9 from UNC93B1 in endosomes. In terms of tissue distribution, expressed in the basolateral region of gastric epithelial cells with high levels detected in antrum and body mucosa (at protein level). Detected in spleen and stomach at higher levels in C57BL/6 mice than BALB/C.

It is found in the endoplasmic reticulum membrane. Its subcellular location is the endosome. It localises to the lysosome. The protein localises to the cytoplasmic vesicle. The protein resides in the phagosome. Functionally, key component of innate and adaptive immunity. TLRs (Toll-like receptors) control host immune response against pathogens through recognition of molecular patterns specific to microorganisms. TLR9 is a nucleotide-sensing TLR which is activated by unmethylated cytidine-phosphate-guanosine (CpG) dinucleotides. Acts via MYD88 and TRAF6, leading to NF-kappa-B activation, cytokine secretion and the inflammatory response. Plays a role in defense against systemic mouse cytomegalovirus infection. Controls lymphocyte response to Helicobacter infection. Upon CpG stimulation, induces B-cell proliferation, activation, survival and antibody production. In Mus musculus (Mouse), this protein is Toll-like receptor 9 (Tlr9).